Here is a 105-residue protein sequence, read N- to C-terminus: NADH-quinone oxidoreductase subunit K (105 aa).

The next 3 membrane-spanning stretches (helical) occupy residues 9–29 (PNYY…GVLV), 34–54 (IVLF…LVTF), and 65–85 (IMAF…LAII).

It belongs to the complex I subunit 4L family. In terms of assembly, NDH-1 is composed of 14 different subunits. Subunits NuoA, H, J, K, L, M, N constitute the membrane sector of the complex.

The protein resides in the cell membrane. The enzyme catalyses a quinone + NADH + 5 H(+)(in) = a quinol + NAD(+) + 4 H(+)(out). In terms of biological role, NDH-1 shuttles electrons from NADH, via FMN and iron-sulfur (Fe-S) centers, to quinones in the respiratory chain. The immediate electron acceptor for the enzyme in this species is believed to be a menaquinone. Couples the redox reaction to proton translocation (for every two electrons transferred, four hydrogen ions are translocated across the cytoplasmic membrane), and thus conserves the redox energy in a proton gradient. The protein is NADH-quinone oxidoreductase subunit K of Salinispora tropica (strain ATCC BAA-916 / DSM 44818 / JCM 13857 / NBRC 105044 / CNB-440).